We begin with the raw amino-acid sequence, 264 residues long: Thymidylate synthase (264 aa).

Arginine 21 provides a ligand contact to dUMP. Histidine 51 serves as a coordination point for (6R)-5,10-methylene-5,6,7,8-tetrahydrofolate. 126-127 (RR) contributes to the dUMP binding site. The Nucleophile role is filled by cysteine 146. Residues 166-169 (RSCD), asparagine 177, and 207-209 (HLY) contribute to the dUMP site. Aspartate 169 is a binding site for (6R)-5,10-methylene-5,6,7,8-tetrahydrofolate. Position 263 (alanine 263) interacts with (6R)-5,10-methylene-5,6,7,8-tetrahydrofolate.

It belongs to the thymidylate synthase family. Bacterial-type ThyA subfamily. As to quaternary structure, homodimer.

The protein localises to the cytoplasm. It catalyses the reaction dUMP + (6R)-5,10-methylene-5,6,7,8-tetrahydrofolate = 7,8-dihydrofolate + dTMP. It functions in the pathway pyrimidine metabolism; dTTP biosynthesis. Functionally, catalyzes the reductive methylation of 2'-deoxyuridine-5'-monophosphate (dUMP) to 2'-deoxythymidine-5'-monophosphate (dTMP) while utilizing 5,10-methylenetetrahydrofolate (mTHF) as the methyl donor and reductant in the reaction, yielding dihydrofolate (DHF) as a by-product. This enzymatic reaction provides an intracellular de novo source of dTMP, an essential precursor for DNA biosynthesis. The chain is Thymidylate synthase from Yersinia pestis bv. Antiqua (strain Antiqua).